The following is a 245-amino-acid chain: 1-(5-phosphoribosyl)-5-[(5-phosphoribosylamino)methylideneamino] imidazole-4-carboxamide isomerase (245 aa).

Aspartate 7 serves as the catalytic Proton acceptor. Catalysis depends on aspartate 129, which acts as the Proton donor.

The protein belongs to the HisA/HisF family.

It localises to the cytoplasm. The catalysed reaction is 1-(5-phospho-beta-D-ribosyl)-5-[(5-phospho-beta-D-ribosylamino)methylideneamino]imidazole-4-carboxamide = 5-[(5-phospho-1-deoxy-D-ribulos-1-ylimino)methylamino]-1-(5-phospho-beta-D-ribosyl)imidazole-4-carboxamide. It participates in amino-acid biosynthesis; L-histidine biosynthesis; L-histidine from 5-phospho-alpha-D-ribose 1-diphosphate: step 4/9. The chain is 1-(5-phosphoribosyl)-5-[(5-phosphoribosylamino)methylideneamino] imidazole-4-carboxamide isomerase from Shewanella pealeana (strain ATCC 700345 / ANG-SQ1).